The sequence spans 229 residues: Large ribosomal subunit protein uL1 (229 aa).

The protein belongs to the universal ribosomal protein uL1 family. As to quaternary structure, part of the 50S ribosomal subunit.

Binds directly to 23S rRNA. The L1 stalk is quite mobile in the ribosome, and is involved in E site tRNA release. Functionally, protein L1 is also a translational repressor protein, it controls the translation of the L11 operon by binding to its mRNA. This chain is Large ribosomal subunit protein uL1, found in Lactococcus lactis subsp. cremoris (strain MG1363).